The sequence spans 277 residues: Sulfur carrier protein FdhD (277 aa).

Residue cysteine 121 is the Cysteine persulfide intermediate of the active site. Residue 260 to 265 (FCKPGR) coordinates Mo-bis(molybdopterin guanine dinucleotide).

The protein belongs to the FdhD family.

The protein localises to the cytoplasm. Required for formate dehydrogenase (FDH) activity. Acts as a sulfur carrier protein that transfers sulfur from IscS to the molybdenum cofactor prior to its insertion into FDH. The protein is Sulfur carrier protein FdhD of Escherichia coli O81 (strain ED1a).